The sequence spans 536 residues: Pre-mRNA 3'-end-processing factor FIP1 (536 aa).

Basic and acidic residues-rich tracts occupy residues 1-10 (MSAGEVERLV) and 32-42 (VHVHSDLAKDL). 3 disordered regions span residues 1–95 (MSAG…EDDV), 212–246 (VQQGRTGNSEKEAALPSTKAEFTSPPSLFKTGLPP), and 300–536 (FPPG…APAE). The tract at residues 1–110 (MSAGEVERLV…DIKTGAPQYG (110 aa)) is sufficient for interaction with PAPOLA. The interval 1–296 (MSAGEVERLV…TEVDNNFSKP (296 aa)) is necessary for stimulating PAPOLA activity. Composition is skewed to acidic residues over residues 43 to 54 (DENEVERPEEEN) and 80 to 94 (TEDDSDSDSDDDEDD). Residues serine 84, serine 86, and serine 88 each carry the phosphoserine modification. The segment at 136–219 (KGVDLDAPGS…ITVQQGRTGN (84 aa)) is sufficient for interaction with CPSF4. Residues 300–344 (FPPGAPPTHLPPPPFLPPPPTVSTAPPLIPPPGFPPPPGAPPPSL) are compositionally biased toward pro residues. At tyrosine 366 the chain carries Phosphotyrosine. Residues 374-390 (LTSSAPSWPSLVDTTKQ) are compositionally biased toward polar residues. Residues 383 to 536 (SLVDTTKQWD…QESTEAAPAE (154 aa)) form a sufficient for interaction with CPSF1 and CSTF3 region. The segment covering 394 to 434 (YARREKDRDRDRERDRDRERERDRDRERERTRERERERDHS) has biased composition (basic and acidic residues). The interval 397–432 (REKDRDRDRERDRDRERERDRDRERERTRERERERD) is arg/Asp/Glu-rich domain. The residue at position 434 (serine 434) is a Phosphoserine. Position 436 is a phosphothreonine (threonine 436). A phosphoserine mark is found at serine 438 and serine 442. Positions 443–470 (DEERYRYREYAERGYERHRASREKEERH) are enriched in basic and acidic residues. Residues 484–493 (KSSRSNSRRR) are compositionally biased toward basic residues. Phosphoserine is present on serine 496. Residues 502-512 (HRRHKHKKSKR) are compositionally biased toward basic residues.

Belongs to the FIP1 family. In terms of assembly, component of the cleavage and polyadenylation specificity factor (CPSF) complex, composed of CPSF1, CPSF2, CPSF3, CPSF4 and FIP1L1. Found in a complex with CPSF1, FIP1L1 and PAPOLA. Interacts with CPSF1, CPSF4, CSTF2 and CSTF3. Interacts with AHCYL1 (when phosphorylated); the interaction is direct and associates AHCYL1 with the CPSF complex and RNA. Interacts with PAPOLA; the interaction seems to be increased by the interaction with AHCYL1. Interacts with NUDT21/CPSF5; this interaction occurs in a RNA sequence-specific manner. Interacts (preferentially via unphosphorylated form and Arg/Glu/Asp-rich domain) with CPSF6 (via Arg/Ser-rich domain); this interaction mediates, at least in part, the interaction between the CFIm and CPSF complexes and may be inhibited by CPSF6 hyper-phosphorylation. Interacts (preferentially via unphosphorylated form and Arg/Asp/Glu-rich domain) with CPSF7 (via Arg/Ser-rich domain); this interaction mediates, at least in part, the interaction between the CFIm and CPSF complexes and may be inhibited by CPSF7 hyper-phosphorylation.

The protein localises to the nucleus. In terms of biological role, component of the cleavage and polyadenylation specificity factor (CPSF) complex that plays a key role in pre-mRNA 3'-end formation, recognizing the AAUAAA signal sequence and interacting with poly(A) polymerase and other factors to bring about cleavage and poly(A) addition. FIP1L1 contributes to poly(A) site recognition and stimulates poly(A) addition. Binds to U-rich RNA sequence elements surrounding the poly(A) site. May act to tether poly(A) polymerase to the CPSF complex. The sequence is that of Pre-mRNA 3'-end-processing factor FIP1 (Fip1l1) from Rattus norvegicus (Rat).